Reading from the N-terminus, the 309-residue chain is Low-density lipoprotein receptor-related protein 1 (309 aa).

It belongs to the LDLR family.

The protein resides in the endoplasmic reticulum. It localises to the golgi apparatus. It is found in the endosome. Functionally, involved in endocytosis, fatty acid beta-oxidation and infectious growth. Plays a critical role in the accumulation of MSN2 from the cytosol to the nucleus by activating the cyclic AMP signaling pathway. MSN2 can then target the dienoyl-coenzyme A isomerase DCI1 and other genes involved in fatty acid beta-oxidation, which is important for lipid droplets degradation and infectious growth. In Pyricularia oryzae (strain 70-15 / ATCC MYA-4617 / FGSC 8958) (Rice blast fungus), this protein is Low-density lipoprotein receptor-related protein 1.